Here is a 113-residue protein sequence, read N- to C-terminus: Heavy metal-associated isoprenylated plant protein 15 (113 aa).

One can recognise an HMA domain in the interval Met1–Tyr65. Residues Asp69–Glu89 are a coiled coil. Cysteine methyl ester is present on Cys110. Cys110 carries S-farnesyl cysteine lipidation. Positions Val111 to Cys113 are cleaved as a propeptide — removed in mature form.

The protein belongs to the HIPP family. Expressed in embryo sacs.

Functionally, probable heavy-metal-binding protein. This chain is Heavy metal-associated isoprenylated plant protein 15, found in Arabidopsis thaliana (Mouse-ear cress).